Here is a 1044-residue protein sequence, read N- to C-terminus: Ribonucleoside-diphosphate reductase subunit alpha (1044 aa).

ATP-cone domains lie at 9-111, 118-217, and 235-325; these read YTIV…KAER, IAII…ARAR, and YVVQ…ETLG. Substrate is bound by residues Thr-440, 455–456, Gly-484, 668–672, and 855–859; these read SC, NLCTE, and PTATI. An intrachain disulfide couples Cys-456 to Cys-685. Asn-668 (proton acceptor) is an active-site residue. The active-site Cysteine radical intermediate is the Cys-670. Glu-672 (proton acceptor) is an active-site residue.

It belongs to the ribonucleoside diphosphate reductase large chain family. As to quaternary structure, tetramer of two alpha and two beta subunits.

It carries out the reaction a 2'-deoxyribonucleoside 5'-diphosphate + [thioredoxin]-disulfide + H2O = a ribonucleoside 5'-diphosphate + [thioredoxin]-dithiol. Under complex allosteric control mediated by deoxynucleoside triphosphates and ATP binding. The type of nucleotide bound at the specificity site determines substrate preference. It seems probable that ATP makes the enzyme reduce CDP and UDP, dGTP favors ADP reduction and dTTP favors GDP reduction. Its function is as follows. Provides the precursors necessary for DNA synthesis. Catalyzes the biosynthesis of deoxyribonucleotides from the corresponding ribonucleotides. The sequence is that of Ribonucleoside-diphosphate reductase subunit alpha (nrdA) from Chlamydia pneumoniae (Chlamydophila pneumoniae).